Consider the following 156-residue polypeptide: RNA polymerase sigma factor SigS (156 aa).

The Polymerase core binding signature appears at 29-44 (EYYQLLLIKMWQLSQI). Residues 126 to 145 (QYEIADIMSLSTSTIKLIKA) constitute a DNA-binding region (H-T-H motif).

The protein belongs to the sigma-70 factor family.

Sigma factors are initiation factors that promote the attachment of RNA polymerase to specific initiation sites and are then released. Sigma-S contributes to the protection against external stress, thus playing a role in cellular fitness and survival. The protein is RNA polymerase sigma factor SigS (sigS) of Staphylococcus aureus (strain MRSA252).